A 145-amino-acid chain; its full sequence is Large ribosomal subunit protein uL13 (145 aa).

The protein belongs to the universal ribosomal protein uL13 family. As to quaternary structure, part of the 50S ribosomal subunit. Binds to Obg (AC P20964).

In terms of biological role, this protein is one of the early assembly proteins of the 50S ribosomal subunit, although it is not seen to bind rRNA by itself. It is important during the early stages of 50S assembly. This is Large ribosomal subunit protein uL13 from Bacillus subtilis (strain 168).